The primary structure comprises 448 residues: Glutamyl-tRNA reductase (448 aa).

Substrate-binding positions include 49–52 (TCNR), Ser109, 114–116 (ETQ), and Gln120. Cys50 functions as the Nucleophile in the catalytic mechanism. 189–194 (GAGEMG) contributes to the NADP(+) binding site.

It belongs to the glutamyl-tRNA reductase family. Homodimer.

The enzyme catalyses (S)-4-amino-5-oxopentanoate + tRNA(Glu) + NADP(+) = L-glutamyl-tRNA(Glu) + NADPH + H(+). The protein operates within porphyrin-containing compound metabolism; protoporphyrin-IX biosynthesis; 5-aminolevulinate from L-glutamyl-tRNA(Glu): step 1/2. Its function is as follows. Catalyzes the NADPH-dependent reduction of glutamyl-tRNA(Glu) to glutamate 1-semialdehyde (GSA). The chain is Glutamyl-tRNA reductase from Staphylococcus epidermidis (strain ATCC 35984 / DSM 28319 / BCRC 17069 / CCUG 31568 / BM 3577 / RP62A).